Here is a 76-residue protein sequence, read N- to C-terminus: Bomanin Tailed 2 (76 aa).

A signal peptide spans 1–22; that stretch reads MKALQVAGTLMLLFCLLAAVNA. The propeptide at 23 to 24 is removed by a dipeptidylpeptidase; sequence TP. Cys33 and Cys36 are disulfide-bonded.

It belongs to the bomanin family.

It is found in the secreted. Its function is as follows. Secreted immune-induced peptide induced by Toll signaling. Has a role in resistance to bacterial and fungal infections. The strength of antimicrobial activity appears to correlate with the overall level of expression. This chain is Bomanin Tailed 2, found in Drosophila melanogaster (Fruit fly).